We begin with the raw amino-acid sequence, 382 residues long: MTSHFSSLPAHRSYIFSLYRDVLRNIHRCCYSVELQNILTSKLNLTMKQQKGTMSSWKAHSKIKELEELNDRLINRDLPYLKELINNLSGNKINSTQPNQYVQDLKEATNLINEYHSNNSQSIETIKKMDILNRYIKTKQSKHLLPKEISNVYKESLLLPFAIHEDSIYKLNKLHNQLIRGPPRVRLTNTKAGKITIWFLRSALNKKDRQSKKLKLRIAKEKQKHQQRIDNIKTCEKYAYWALLEASWESLLNTGKLPTININKTINNLSTLDNEDININRKNNHHIKDIHVKEWIEPITYSIKQLVDKEFERKCHYENYKKIILYGKNNGLIDFFENKTKVMYARRVSRYKTVVNGLPFIIPTIPRRDLRTALLDNKVLLP.

Belongs to the RRG1 family.

The protein resides in the mitochondrion. Essential for respiratory growth and required for mitochondrial protein synthesis. Required for vacuolar acidification. This is Required for respiratory growth protein 1, mitochondrial (RRG1) from Vanderwaltozyma polyspora (strain ATCC 22028 / DSM 70294 / BCRC 21397 / CBS 2163 / NBRC 10782 / NRRL Y-8283 / UCD 57-17) (Kluyveromyces polysporus).